The sequence spans 1087 residues: Platelet-derived growth factor receptor alpha (1087 aa).

The first 24 residues, 1–24 (MMPAMRASLILGCLLIIGPWAILA), serve as a signal peptide directing secretion. At 25–530 (ENPLPTIFPD…PTLRSELTVA (506 aa)) the chain is on the extracellular side. Ig-like C2-type domains lie at 27–114 (PLPT…SEIE) and 118–211 (IYIY…LQTW). A disulfide bond links C50 and C101. N77 and N104 each carry an N-linked (GlcNAc...) asparagine glycan. C151 and C192 are joined by a disulfide. N-linked (GlcNAc...) asparagine glycans are attached at residues N216, N282, N309, N356, N362, N461, and N471. 3 consecutive Ig-like C2-type domains span residues 217–309 (ISVE…KKTN), 315–409 (KGFI…KSYS), and 417–519 (PALI…LKLV). A disulfide bridge links C238 with C293. C438 and C503 are oxidised to a cystine. A helical membrane pass occupies residues 531–551 (AAVLVLLVIVIISLIVLVIIW). Over 552–1087 (KQKPRYEIRW…SSDLVEDSFL (536 aa)) the chain is Cytoplasmic. Residues Y574 and Y576 each carry the phosphotyrosine; by autocatalysis modification. The Protein kinase domain maps to 595 to 970 (LVLGRILGSG…CYETVLHDFL (376 aa)). Residues 601 to 609 (LGSGAFGKV) and K629 each bind ATP. Phosphotyrosine; by autocatalysis occurs at positions 722, 733, 744, 756, and 764. The active-site Proton acceptor is D818. A phosphotyrosine; by autocatalysis mark is found at Y849, Y988, and Y1017. The disordered stretch occupies residues 1017-1064 (YIIPLPDIDPVSEDESGKRNRHSSQTSEESAIETGSSSSTFIKRDDET). The span at 1039–1057 (SSQTSEESAIETGSSSSTF) shows a compositional bias: polar residues.

It belongs to the protein kinase superfamily. Tyr protein kinase family. CSF-1/PDGF receptor subfamily. Interacts with homodimeric pdgfa, pdgfb and pdgfc, and with heterodimers formed by pdgfa and pdgfb. Monomer in the absence of bound ligand. Interaction with dimeric pdgfa, pdgfb and/or pdgfc leads to receptor dimerization, where both pdgfra homodimers and heterodimers with pdgfrb are observed. Post-translationally, ubiquitinated, leading to its internalization and degradation. In terms of processing, autophosphorylated on tyrosine residues upon ligand binding. Autophosphorylation occurs in trans, i.e. one subunit of the dimeric receptor phosphorylates tyrosine residues on the other subunit.

Its subcellular location is the cell membrane. The protein localises to the cell projection. The protein resides in the cilium. It is found in the golgi apparatus. It catalyses the reaction L-tyrosyl-[protein] + ATP = O-phospho-L-tyrosyl-[protein] + ADP + H(+). Present in an inactive conformation in the absence of bound ligand. Binding of pdgfa and/or pdgfb leads to dimerization and activation by autophosphorylation on tyrosine residues. Functionally, tyrosine-protein kinase that acts as a cell-surface receptor for pdgfa, pdgfb and pdgfc and plays an essential role in the regulation of embryonic development, cell proliferation, survival and chemotaxis. Depending on the context, promotes or inhibits cell proliferation and cell migration. Plays an important role in the differentiation of bone marrow-derived mesenchymal stem cells. Required for normal skeleton development. Required for normal development of the gastrointestinal tract. Plays a role in cell migration and chemotaxis in wound healing. Plays a role in platelet activation, secretion of agonists from platelet granules, and in thrombin-induced platelet aggregation. Binding of its cognate ligands - homodimeric pdgfa, homodimeric pdgfb, heterodimers formed by pdgfa and pdgfb or homodimeric pdgfc -leads to the activation of several signaling cascades; the response depends on the nature of the bound ligand and is modulated by the formation of heterodimers between pdgfra and pdgfrb. Phosphorylates pik3r1, plcg1, and ptpn11. Activation of plcg1 leads to the production of the cellular signaling molecules diacylglycerol and inositol 1,4,5-trisphosphate, mobilization of cytosolic Ca(2+) and the activation of protein kinase C. Phosphorylates pik3r1, the regulatory subunit of phosphatidylinositol 3-kinase, and thereby mediates activation of the akt1 signaling pathway. Mediates activation of hras and of the MAP kinases mapk1/erk2 and/or mapk3/erk1. Promotes activation of stat family members stat1, stat3 and stat5a and/or stat5b. Receptor signaling is down-regulated by protein phosphatases that dephosphorylate the receptor and its down-stream effectors, and by rapid internalization of the activated receptor. This is Platelet-derived growth factor receptor alpha (pdgfra) from Xenopus laevis (African clawed frog).